The sequence spans 174 residues: Adenylosuccinate synthetase (174 aa).

GTP is bound by residues 13–19 and 41–43; these read GDEGKGK and GHT. D14 functions as the Proton acceptor in the catalytic mechanism. Residues D14 and G41 each coordinate Mg(2+). IMP is bound by residues 14 to 17, 39 to 42, T130, and R144; these read DEGK and NAGH. H42 (proton donor) is an active-site residue.

The protein belongs to the adenylosuccinate synthetase family. As to quaternary structure, homodimer. Mg(2+) is required as a cofactor.

The protein localises to the cytoplasm. It catalyses the reaction IMP + L-aspartate + GTP = N(6)-(1,2-dicarboxyethyl)-AMP + GDP + phosphate + 2 H(+). Its pathway is purine metabolism; AMP biosynthesis via de novo pathway; AMP from IMP: step 1/2. Its function is as follows. Plays an important role in the de novo pathway of purine nucleotide biosynthesis. Catalyzes the first committed step in the biosynthesis of AMP from IMP. The polypeptide is Adenylosuccinate synthetase (Stutzerimonas stutzeri (Pseudomonas stutzeri)).